The chain runs to 292 residues: Zinc finger protein OZF (292 aa).

10 C2H2-type zinc fingers span residues 16–38 (FACKVCGKVFSHKSNLTEHEHFH), 44–66 (FECNECGKAFSQKQYVIKHQNTH), 72–94 (FECNECGKSFSQKENLLTHQKIH), 100–122 (FECKDCGKAFIQKSNLIRHQRTH), 128–150 (FVCKECGKTFSGKSNLTEHEKIH), 156–178 (FKCSECGTAFGQKKYLIKHQNIH), 184–206 (YECNECGKAFSQRTSLIVHVRIH), 212–234 (YECNVCGKAFSQSSSLTVHVRSH), 240–262 (YGCNECGKAFSQFSTLALHLRIH), and 268–290 (YQCSECGKAFSQKSHHIRHQKIH). Residues lysine 28, lysine 51, and lysine 56 each participate in a glycyl lysine isopeptide (Lys-Gly) (interchain with G-Cter in SUMO2) cross-link. Glycyl lysine isopeptide (Lys-Gly) (interchain with G-Cter in SUMO) cross-links involve residues lysine 157 and lysine 169. A Glycyl lysine isopeptide (Lys-Gly) (interchain with G-Cter in SUMO2) cross-link involves residue lysine 173. The tract at residues 212 to 292 (YECNVCGKAF…HIRHQKIHTH (81 aa)) is interaction with TERF2IP.

It belongs to the krueppel C2H2-type zinc-finger protein family. In terms of assembly, binds DNA. Interacts with SUMO conjugating enzyme UBC9/UBE2I. Interacts with the telomeric protein TERF2IP. Post-translationally, sumoylated. In terms of tissue distribution, liver, skeletal and heart muscle, mammary cells. Very low levels in brain, lung, placenta and kidney. Strongly overexpressed in many pancreas and colorectal cancers. Increased gene copy numbers are detected in 3 of 12 tumor cell lines and 2 of 12 primary pancreatic carcinomas. Overexpressed in 80% of colorectal cancers.

The protein localises to the nucleus. In Homo sapiens (Human), this protein is Zinc finger protein OZF (ZNF146).